The sequence spans 558 residues: Dihydroxy-acid dehydratase (558 aa).

Cys49 contacts [2Fe-2S] cluster. Asp81 provides a ligand contact to Mg(2+). Cys122 is a [2Fe-2S] cluster binding site. Mg(2+) contacts are provided by Asp123 and Lys124. N6-carboxylysine is present on Lys124. [2Fe-2S] cluster is bound at residue Cys194. Residue Glu446 participates in Mg(2+) binding. Residue Ser472 is the Proton acceptor of the active site.

The protein belongs to the IlvD/Edd family. Homodimer. [2Fe-2S] cluster serves as cofactor. It depends on Mg(2+) as a cofactor.

The enzyme catalyses (2R)-2,3-dihydroxy-3-methylbutanoate = 3-methyl-2-oxobutanoate + H2O. The catalysed reaction is (2R,3R)-2,3-dihydroxy-3-methylpentanoate = (S)-3-methyl-2-oxopentanoate + H2O. It functions in the pathway amino-acid biosynthesis; L-isoleucine biosynthesis; L-isoleucine from 2-oxobutanoate: step 3/4. Its pathway is amino-acid biosynthesis; L-valine biosynthesis; L-valine from pyruvate: step 3/4. Functions in the biosynthesis of branched-chain amino acids. Catalyzes the dehydration of (2R,3R)-2,3-dihydroxy-3-methylpentanoate (2,3-dihydroxy-3-methylvalerate) into 2-oxo-3-methylpentanoate (2-oxo-3-methylvalerate) and of (2R)-2,3-dihydroxy-3-methylbutanoate (2,3-dihydroxyisovalerate) into 2-oxo-3-methylbutanoate (2-oxoisovalerate), the penultimate precursor to L-isoleucine and L-valine, respectively. The polypeptide is Dihydroxy-acid dehydratase (Synechococcus sp. (strain RCC307)).